Reading from the N-terminus, the 328-residue chain is Putative UDP-N-acetylglucosamine--dolichyl-phosphate N-acetylglucosaminephosphotransferase (328 aa).

The next 9 membrane-spanning stretches (helical) occupy residues 1-21, 48-68, 78-98, 107-127, 129-149, 166-186, 192-212, 228-248, and 301-321; these read MLVSLLGILLSVIVGFVVTLI, VPVLGGIGIVAGFVAGSFTFL, IENVVVSILLSSLIIGFLGLL, ATRAFLPIFASIPLILYSVGH, IISIPFLGKVNFGILFYIIIL, LNGLGAGMGLIMALALAYIGL, SFYAGIVSIILASVLFGFLIF, FIGSVIGSIGISGYMYTALFF, and YHIVLIIWGIEILFAILAVVF.

This sequence belongs to the glycosyltransferase 4 family.

The protein resides in the cell membrane. The catalysed reaction is a di-trans,poly-cis-dolichyl phosphate + UDP-N-acetyl-alpha-D-glucosamine = an N-acetyl-alpha-D-glucosaminyl-diphospho-di-trans,poly-cis-dolichol + UMP. Inhibited by tunicamycin. The polypeptide is Putative UDP-N-acetylglucosamine--dolichyl-phosphate N-acetylglucosaminephosphotransferase (gnpTA) (Sulfolobus acidocaldarius (strain ATCC 33909 / DSM 639 / JCM 8929 / NBRC 15157 / NCIMB 11770)).